Reading from the N-terminus, the 120-residue chain is NADH-ubiquinone oxidoreductase chain 3 (120 aa).

The next 3 membrane-spanning stretches (helical) occupy residues F7–L27, F62–F82, and M89–I109.

It belongs to the complex I subunit 3 family.

It localises to the mitochondrion membrane. It carries out the reaction a ubiquinone + NADH + 5 H(+)(in) = a ubiquinol + NAD(+) + 4 H(+)(out). Functionally, core subunit of the mitochondrial membrane respiratory chain NADH dehydrogenase (Complex I) that is believed to belong to the minimal assembly required for catalysis. Complex I functions in the transfer of electrons from NADH to the respiratory chain. The immediate electron acceptor for the enzyme is believed to be ubiquinone. The sequence is that of NADH-ubiquinone oxidoreductase chain 3 (nad3) from Dictyostelium discoideum (Social amoeba).